Consider the following 59-residue polypeptide: Large ribosomal subunit protein uL30 (59 aa).

This sequence belongs to the universal ribosomal protein uL30 family. As to quaternary structure, part of the 50S ribosomal subunit.

The protein is Large ribosomal subunit protein uL30 of Alteromonas mediterranea (strain DSM 17117 / CIP 110805 / LMG 28347 / Deep ecotype).